The following is a 278-amino-acid chain: DNA oxidative demethylase ALKBH2 (278 aa).

The tract at residues M1–V49 is disordered. The short motif at R3–K7 is the PCNA-binding element. Substrate is bound by residues F101–K103 and Y121–F123. In terms of domain architecture, Fe2OG dioxygenase spans T151–L256. Residues N158, Y160, and H170 each contribute to the 2-oxoglutarate site. Fe cation is bound by residues H170 and D172. D173 provides a ligand contact to substrate. 4 residues coordinate 2-oxoglutarate: H235, R247, T251, and R253. H235 serves as a coordination point for Fe cation.

Belongs to the alkB family. As to quaternary structure, interacts with PCNA homotrimer; this interaction is enhanced during the S-phase of the cell cycle. Interacts with nucleolar proteins NCL, UBTF and NPM1. Interacts with XRCC5-XRCC6 heterodimer. Fe(2+) is required as a cofactor.

The protein resides in the nucleus. The protein localises to the nucleolus. It localises to the nucleoplasm. It carries out the reaction a methylated nucleobase within DNA + 2-oxoglutarate + O2 = a nucleobase within DNA + formaldehyde + succinate + CO2. The enzyme catalyses an N(1)-methyl-2'-deoxyadenosine in double-stranded DNA + 2-oxoglutarate + O2 = a 2'-deoxyadenosine in double-stranded DNA + formaldehyde + succinate + CO2 + H(+). The catalysed reaction is an N(1)-methyl-2'-deoxyadenosine in single-stranded DNA + 2-oxoglutarate + O2 = a 2'-deoxyadenosine in single-stranded DNA + formaldehyde + succinate + CO2 + H(+). It catalyses the reaction an N(3)-methyl-2'-deoxycytidine in double-stranded DNA + 2-oxoglutarate + O2 = a 2'-deoxycytidine in double-stranded DNA + formaldehyde + succinate + CO2 + H(+). It carries out the reaction an N(3)-methyl-2'-deoxycytidine in single-stranded DNA + 2-oxoglutarate + O2 = a 2'-deoxycytidine in single-stranded DNA + formaldehyde + succinate + CO2 + H(+). The enzyme catalyses a 1,N(6)-etheno-2'-deoxyadenosine in double-stranded DNA + 2-oxoglutarate + O2 + H2O = a 2'-deoxyadenosine in double-stranded DNA + glyoxal + succinate + CO2. The catalysed reaction is a 1,N(6)-etheno-2'-deoxyadenosine in single-stranded DNA + 2-oxoglutarate + O2 + H2O = a 2'-deoxyadenosine in single-stranded DNA + glyoxal + succinate + CO2. It catalyses the reaction a 3,N(4)-etheno-2'-deoxycytidine in double-stranded DNA + 2-oxoglutarate + O2 + H2O = a 2'-deoxycytidine in double-stranded DNA + glyoxal + succinate + CO2. It carries out the reaction a 3,N(4)-etheno-2'-deoxycytidine in single-stranded DNA + 2-oxoglutarate + O2 + H2O = a 2'-deoxycytidine in single-stranded DNA + glyoxal + succinate + CO2. The enzyme catalyses a 1,N(2)-etheno-2'-deoxyguanosine in double-stranded DNA + 2-oxoglutarate + O2 + H2O = a 2'-deoxyguanosine in double-stranded DNA + glyoxal + succinate + CO2. With respect to regulation, activated by ascorbate and magnesium ions. In terms of biological role, dioxygenase that repairs alkylated nucleic acid bases by direct reversal oxidative dealkylation. Can process both double-stranded (ds) and single-stranded (ss) DNA substrates, with a strong preference for dsDNA. Uses molecular oxygen, 2-oxoglutarate and iron as cofactors to oxidize the alkyl groups that are subsequently released as aldehydes, regenerating the undamaged bases. Probes the base pair stability, locates a weakened base pair and flips the damaged base to accommodate the lesion in its active site for efficient catalysis. Repairs monoalkylated bases, specifically N1-methyladenine and N3-methylcytosine, as well as higher order alkyl adducts such as bases modified with exocyclic bridged adducts known as etheno adducts including 1,N6-ethenoadenine, 3,N4-ethenocytosine and 1,N2-ethenoguanine. Acts as a gatekeeper of genomic integrity under alkylation stress. Efficiently repairs alkylated lesions in ribosomal DNA (rDNA). These lesions can cause ss- and dsDNA strand breaks that severely impair rDNA transcription. In a response mechanism to DNA damage, associates with PCNA at replication forks to repair alkylated adducts prior to replication. The chain is DNA oxidative demethylase ALKBH2 (ALKBH2) from Bos taurus (Bovine).